A 235-amino-acid polypeptide reads, in one-letter code: tRNA pseudouridine synthase B (235 aa).

Aspartate 48 serves as the catalytic Nucleophile.

It belongs to the pseudouridine synthase TruB family. Type 1 subfamily.

It carries out the reaction uridine(55) in tRNA = pseudouridine(55) in tRNA. In terms of biological role, responsible for synthesis of pseudouridine from uracil-55 in the psi GC loop of transfer RNAs. The protein is tRNA pseudouridine synthase B of Phocaeicola vulgatus (strain ATCC 8482 / DSM 1447 / JCM 5826 / CCUG 4940 / NBRC 14291 / NCTC 11154) (Bacteroides vulgatus).